The following is a 526-amino-acid chain: Peptide chain release factor 3 (526 aa).

Positions 8–277 constitute a tr-type G domain; sequence NKRRTFAIIS…GLTEWAPKPQ (270 aa). GTP-binding positions include 17–24, 85–89, and 139–142; these read SHPDAGKT, DTPGH, and NKLD.

This sequence belongs to the TRAFAC class translation factor GTPase superfamily. Classic translation factor GTPase family. PrfC subfamily.

Its subcellular location is the cytoplasm. In terms of biological role, increases the formation of ribosomal termination complexes and stimulates activities of RF-1 and RF-2. It binds guanine nucleotides and has strong preference for UGA stop codons. It may interact directly with the ribosome. The stimulation of RF-1 and RF-2 is significantly reduced by GTP and GDP, but not by GMP. The sequence is that of Peptide chain release factor 3 from Actinobacillus pleuropneumoniae serotype 5b (strain L20).